Here is a 415-residue protein sequence, read N- to C-terminus: Serine hydroxymethyltransferase 1 (415 aa).

Residues leucine 122 and 126–128 (GHL) each bind (6S)-5,6,7,8-tetrahydrofolate. The residue at position 230 (lysine 230) is an N6-(pyridoxal phosphate)lysine.

Belongs to the SHMT family. As to quaternary structure, homodimer. The cofactor is pyridoxal 5'-phosphate.

Its subcellular location is the cytoplasm. It catalyses the reaction (6R)-5,10-methylene-5,6,7,8-tetrahydrofolate + glycine + H2O = (6S)-5,6,7,8-tetrahydrofolate + L-serine. It participates in one-carbon metabolism; tetrahydrofolate interconversion. It functions in the pathway amino-acid biosynthesis; glycine biosynthesis; glycine from L-serine: step 1/1. Its function is as follows. Catalyzes the reversible interconversion of serine and glycine with tetrahydrofolate (THF) serving as the one-carbon carrier. This reaction serves as the major source of one-carbon groups required for the biosynthesis of purines, thymidylate, methionine, and other important biomolecules. Also exhibits THF-independent aldolase activity toward beta-hydroxyamino acids, producing glycine and aldehydes, via a retro-aldol mechanism. In Cupriavidus pinatubonensis (strain JMP 134 / LMG 1197) (Cupriavidus necator (strain JMP 134)), this protein is Serine hydroxymethyltransferase 1.